We begin with the raw amino-acid sequence, 438 residues long: 3-phosphoshikimate 1-carboxyvinyltransferase (438 aa).

Residues lysine 28, serine 29, and arginine 33 each contribute to the 3-phosphoshikimate site. Lysine 28 serves as a coordination point for phosphoenolpyruvate. Phosphoenolpyruvate is bound by residues glycine 97 and arginine 125. Residues serine 168, serine 169, glutamine 170, glutamate 316, and histidine 343 each coordinate 3-phosphoshikimate. A phosphoenolpyruvate-binding site is contributed by glutamine 170. Glutamate 316 functions as the Proton acceptor in the catalytic mechanism. The phosphoenolpyruvate site is built by arginine 347, arginine 388, and lysine 413.

This sequence belongs to the EPSP synthase family. As to quaternary structure, monomer.

Its subcellular location is the cytoplasm. It catalyses the reaction 3-phosphoshikimate + phosphoenolpyruvate = 5-O-(1-carboxyvinyl)-3-phosphoshikimate + phosphate. Its pathway is metabolic intermediate biosynthesis; chorismate biosynthesis; chorismate from D-erythrose 4-phosphate and phosphoenolpyruvate: step 6/7. Functionally, catalyzes the transfer of the enolpyruvyl moiety of phosphoenolpyruvate (PEP) to the 5-hydroxyl of shikimate-3-phosphate (S3P) to produce enolpyruvyl shikimate-3-phosphate and inorganic phosphate. This chain is 3-phosphoshikimate 1-carboxyvinyltransferase, found in Rhodococcus jostii (strain RHA1).